We begin with the raw amino-acid sequence, 222 residues long: Glutathione S-transferase alpha-4 (222 aa).

Met-1 carries the N-acetylmethionine modification. The GST N-terminal domain occupies 3-83 (VKPKLYYFQG…YLAAKYNLYG (81 aa)). Residues Tyr-9, 54–55 (QV), and 67–68 (QT) contribute to the glutathione site. A GST C-terminal domain is found at 85–208 (DLKERVRIDM…QPGSQRKPPP (124 aa)).

This sequence belongs to the GST superfamily. Alpha family. Homodimer.

It localises to the cytoplasm. The enzyme catalyses RX + glutathione = an S-substituted glutathione + a halide anion + H(+). In terms of biological role, conjugation of reduced glutathione to a wide number of exogenous and endogenous hydrophobic electrophiles. This chain is Glutathione S-transferase alpha-4 (Gsta4), found in Rattus norvegicus (Rat).